The chain runs to 276 residues: Octanoyltransferase LipM (276 aa).

Residues 32–247 form the BPL/LPL catalytic domain; the sequence is GALPPVIRFY…GFEKGLDIKL (216 aa). C149 functions as the Acyl-thioester intermediate in the catalytic mechanism.

It belongs to the octanoyltransferase LipM family. In terms of assembly, monomer.

The catalysed reaction is octanoyl-[ACP] + L-lysyl-[protein] = N(6)-octanoyl-L-lysyl-[protein] + holo-[ACP] + H(+). Its pathway is protein modification; protein lipoylation via endogenous pathway; protein N(6)-(lipoyl)lysine from octanoyl-[acyl-carrier-protein]. Its function is as follows. Catalyzes the transfer of endogenously produced octanoic acid from octanoyl-acyl-carrier-protein onto the lipoyl domain of GcvH, an intermediate carrier during protein lipoylation. This chain is Octanoyltransferase LipM, found in Macrococcus caseolyticus (strain JCSC5402) (Macrococcoides caseolyticum).